Reading from the N-terminus, the 146-residue chain is Cell division protein SepF (146 aa).

This sequence belongs to the SepF family. In terms of assembly, homodimer. Interacts with FtsZ.

It localises to the cytoplasm. Cell division protein that is part of the divisome complex and is recruited early to the Z-ring. Probably stimulates Z-ring formation, perhaps through the cross-linking of FtsZ protofilaments. Its function overlaps with FtsA. The polypeptide is Cell division protein SepF (Alkaliphilus oremlandii (strain OhILAs) (Clostridium oremlandii (strain OhILAs))).